The sequence spans 361 residues: 3-dehydroquinate synthase (361 aa).

NAD(+)-binding positions include 72–77 (SGEKEK), 130–131 (TT), Lys-142, and Lys-151. Zn(2+) is bound by residues Glu-184, His-247, and His-264.

It belongs to the sugar phosphate cyclases superfamily. Dehydroquinate synthase family. The cofactor is Co(2+). Zn(2+) serves as cofactor. It depends on NAD(+) as a cofactor.

Its subcellular location is the cytoplasm. It catalyses the reaction 7-phospho-2-dehydro-3-deoxy-D-arabino-heptonate = 3-dehydroquinate + phosphate. It participates in metabolic intermediate biosynthesis; chorismate biosynthesis; chorismate from D-erythrose 4-phosphate and phosphoenolpyruvate: step 2/7. Catalyzes the conversion of 3-deoxy-D-arabino-heptulosonate 7-phosphate (DAHP) to dehydroquinate (DHQ). This Bacillus cereus (strain ZK / E33L) protein is 3-dehydroquinate synthase.